Reading from the N-terminus, the 533-residue chain is NAD(P)H-quinone oxidoreductase chain 4 2 (533 aa).

The next 14 helical transmembrane spans lie at 5-25, 33-53, 86-106, 114-134, 135-155, 168-188, 208-228, 242-262, 276-296, 310-330, 331-351, 384-404, 416-436, and 462-482; these read FPWL…IPVL, VRWY…MVFW, LAVP…FAAW, LFYF…AAQD, LILF…LISI, FILY…GMAF, ALEL…LPIF, SAPV…YGLI, FAPV…LTAF, ISHM…GLNG, AMLQ…LAGV, ASLA…FLGL, VGVI…LLSM, and TFIA…PKVA.

This sequence belongs to the complex I subunit 4 family.

The protein localises to the cellular thylakoid membrane. It carries out the reaction a plastoquinone + NADH + (n+1) H(+)(in) = a plastoquinol + NAD(+) + n H(+)(out). It catalyses the reaction a plastoquinone + NADPH + (n+1) H(+)(in) = a plastoquinol + NADP(+) + n H(+)(out). In terms of biological role, NDH-1 shuttles electrons from NAD(P)H, via FMN and iron-sulfur (Fe-S) centers, to quinones in the respiratory chain. The immediate electron acceptor for the enzyme in this species is believed to be plastoquinone. Couples the redox reaction to proton translocation (for every two electrons transferred, four hydrogen ions are translocated across the cytoplasmic membrane), and thus conserves the redox energy in a proton gradient. This Thermosynechococcus vestitus (strain NIES-2133 / IAM M-273 / BP-1) protein is NAD(P)H-quinone oxidoreductase chain 4 2.